A 131-amino-acid chain; its full sequence is Small ribosomal subunit protein uS8 (131 aa).

The protein belongs to the universal ribosomal protein uS8 family. As to quaternary structure, part of the 30S ribosomal subunit. Contacts proteins S5 and S12.

Its function is as follows. One of the primary rRNA binding proteins, it binds directly to 16S rRNA central domain where it helps coordinate assembly of the platform of the 30S subunit. The polypeptide is Small ribosomal subunit protein uS8 (Wolbachia pipientis wMel).